A 186-amino-acid chain; its full sequence is Elongation factor P (186 aa).

The protein belongs to the elongation factor P family.

It is found in the cytoplasm. It participates in protein biosynthesis; polypeptide chain elongation. Involved in peptide bond synthesis. Stimulates efficient translation and peptide-bond synthesis on native or reconstituted 70S ribosomes in vitro. Probably functions indirectly by altering the affinity of the ribosome for aminoacyl-tRNA, thus increasing their reactivity as acceptors for peptidyl transferase. This chain is Elongation factor P, found in Prochlorococcus marinus (strain MIT 9301).